A 199-amino-acid polypeptide reads, in one-letter code: Recombination protein RecR (199 aa).

The C4-type zinc-finger motif lies at 58–73; that stretch reads CQTCHHLSAEPTCEIC. Residues 81–175 enclose the Toprim domain; that stretch reads GQICVVADSR…RVSRIAYGLP (95 aa).

Belongs to the RecR family.

In terms of biological role, may play a role in DNA repair. It seems to be involved in an RecBC-independent recombinational process of DNA repair. It may act with RecF and RecO. This Synechococcus sp. (strain WH7803) protein is Recombination protein RecR.